Reading from the N-terminus, the 95-residue chain is HssA/B-like protein 45 (95 aa).

The disordered stretch occupies residues 1–31 (MTLFSSISSISNPMTSSKSSIASFGSGTSMS).

It belongs to the hssA/B family.

This chain is HssA/B-like protein 45 (hssl45), found in Dictyostelium discoideum (Social amoeba).